Here is a 476-residue protein sequence, read N- to C-terminus: Aspartyl/glutamyl-tRNA(Asn/Gln) amidotransferase subunit B (476 aa).

Belongs to the GatB/GatE family. GatB subfamily. Heterotrimer of A, B and C subunits.

It catalyses the reaction L-glutamyl-tRNA(Gln) + L-glutamine + ATP + H2O = L-glutaminyl-tRNA(Gln) + L-glutamate + ADP + phosphate + H(+). The enzyme catalyses L-aspartyl-tRNA(Asn) + L-glutamine + ATP + H2O = L-asparaginyl-tRNA(Asn) + L-glutamate + ADP + phosphate + 2 H(+). Functionally, allows the formation of correctly charged Asn-tRNA(Asn) or Gln-tRNA(Gln) through the transamidation of misacylated Asp-tRNA(Asn) or Glu-tRNA(Gln) in organisms which lack either or both of asparaginyl-tRNA or glutaminyl-tRNA synthetases. The reaction takes place in the presence of glutamine and ATP through an activated phospho-Asp-tRNA(Asn) or phospho-Glu-tRNA(Gln). The polypeptide is Aspartyl/glutamyl-tRNA(Asn/Gln) amidotransferase subunit B (Neisseria gonorrhoeae (strain ATCC 700825 / FA 1090)).